Here is a 568-residue protein sequence, read N- to C-terminus: Tyrosine-protein kinase transforming protein Src (568 aa).

The interval Met1 to Pro58 is disordered. Gly2 is lipidated: N-myristoyl glycine; by host. The segment covering Lys7–His25 has biased composition (basic and acidic residues). The region spanning Gly81–Ser142 is the SH3 domain. The 98-residue stretch at Trp148–Cys245 folds into the SH2 domain. Residues Leu267–Phe520 form the Protein kinase domain. ATP is bound by residues Leu273–Val281 and Lys295. Asp386 (proton acceptor) is an active-site residue. Tyr416 is modified (phosphotyrosine; by autocatalysis).

This sequence belongs to the protein kinase superfamily. Tyr protein kinase family. SRC subfamily. Post-translationally, the phosphorylated form is termed pp60v-src.

The catalysed reaction is L-tyrosyl-[protein] + ATP = O-phospho-L-tyrosyl-[protein] + ADP + H(+). Functionally, this phosphoprotein, required for both the initiation and the maintenance of neoplastic transformation, is a protein kinase that catalyzes the phosphorylation of tyrosine residues in vitro. This chain is Tyrosine-protein kinase transforming protein Src (V-SRC), found in Galliformes.